Consider the following 79-residue polypeptide: Cytochrome b (79 aa).

3 helical membrane-spanning segments follow: residues 1-7, 31-52, and 67-79; these read TAMFLAM, WLIR…YLHI, and WNVG…LTMM. 2 residues coordinate heme b: His-37 and His-51.

The protein belongs to the cytochrome b family. In terms of assembly, the cytochrome bc1 complex contains 3 respiratory subunits (MT-CYB, CYC1 and UQCRFS1), 2 core proteins (UQCRC1 and UQCRC2) and probably 6 low-molecular weight proteins. Heme b serves as cofactor.

The protein resides in the mitochondrion inner membrane. Functionally, component of the ubiquinol-cytochrome c reductase complex (complex III or cytochrome b-c1 complex) that is part of the mitochondrial respiratory chain. The b-c1 complex mediates electron transfer from ubiquinol to cytochrome c. Contributes to the generation of a proton gradient across the mitochondrial membrane that is then used for ATP synthesis. This is Cytochrome b (mt-cyb) from Hypsophrys nicaraguensis (Moga).